Reading from the N-terminus, the 149-residue chain is 3-dehydroquinate dehydratase (149 aa).

Tyr-26 (proton acceptor) is an active-site residue. Substrate contacts are provided by Asn-77, His-83, and Asp-90. His-103 serves as the catalytic Proton donor. Substrate-binding positions include 104-105 and Arg-114; that span reads LS.

Belongs to the type-II 3-dehydroquinase family. As to quaternary structure, homododecamer.

It carries out the reaction 3-dehydroquinate = 3-dehydroshikimate + H2O. Its pathway is metabolic intermediate biosynthesis; chorismate biosynthesis; chorismate from D-erythrose 4-phosphate and phosphoenolpyruvate: step 3/7. Its function is as follows. Catalyzes a trans-dehydration via an enolate intermediate. In Vibrio vulnificus (strain YJ016), this protein is 3-dehydroquinate dehydratase.